The primary structure comprises 228 residues: Phosphatidylglycerophosphate phosphatase PTPMT2 (228 aa).

The span at 1–10 shows a compositional bias: acidic residues; that stretch reads MTDETEEDDT. Residues 1-30 are disordered; that stretch reads MTDETEEDDTTQQRSSRNDGVSKNKGKGFK. Positions 48 and 126 each coordinate substrate. The Tyrosine-protein phosphatase domain occupies 66-213; it reads WWDQIDEYLL…VEEFSRLQSP (148 aa). Cysteine 157 functions as the Phosphocysteine intermediate in the catalytic mechanism. A Glucan phosphatase signature motif CXAGXGR motif is present at residues 157 to 163; it reads CKAGRGR. 158–163 is a binding site for substrate; the sequence is KAGRGR.

Belongs to the protein-tyrosine phosphatase family. Non-receptor class dual specificity subfamily. As to expression, expressed in roots, leaves, stems and flowers. Expressed at low levels in stems and flowers.

The catalysed reaction is O-phospho-L-seryl-[protein] + H2O = L-seryl-[protein] + phosphate. It catalyses the reaction O-phospho-L-threonyl-[protein] + H2O = L-threonyl-[protein] + phosphate. It carries out the reaction O-phospho-L-tyrosyl-[protein] + H2O = L-tyrosyl-[protein] + phosphate. The enzyme catalyses a 1,2-diacyl-sn-glycero-3-phospho-(1'-sn-glycero-3'-phosphate) + H2O = a 1,2-diacyl-sn-glycero-3-phospho-(1'-sn-glycerol) + phosphate. The protein operates within phospholipid metabolism; phosphatidylglycerol biosynthesis; phosphatidylglycerol from CDP-diacylglycerol: step 2/2. In terms of biological role, exhibits phosphatidylglycerophosphate phosphatase activity. Involved in root growth and columella cells organization. May possess protein phosphatase activity. The protein is Phosphatidylglycerophosphate phosphatase PTPMT2 of Arabidopsis thaliana (Mouse-ear cress).